Reading from the N-terminus, the 284-residue chain is Bifunctional protein FolD (284 aa).

Residues 165-167 (GRS) and S190 contribute to the NADP(+) site.

Belongs to the tetrahydrofolate dehydrogenase/cyclohydrolase family. As to quaternary structure, homodimer.

It catalyses the reaction (6R)-5,10-methylene-5,6,7,8-tetrahydrofolate + NADP(+) = (6R)-5,10-methenyltetrahydrofolate + NADPH. The enzyme catalyses (6R)-5,10-methenyltetrahydrofolate + H2O = (6R)-10-formyltetrahydrofolate + H(+). Its pathway is one-carbon metabolism; tetrahydrofolate interconversion. Its function is as follows. Catalyzes the oxidation of 5,10-methylenetetrahydrofolate to 5,10-methenyltetrahydrofolate and then the hydrolysis of 5,10-methenyltetrahydrofolate to 10-formyltetrahydrofolate. This chain is Bifunctional protein FolD, found in Streptococcus equi subsp. zooepidemicus (strain H70).